The primary structure comprises 254 residues: 5-oxoprolinase subunit A (254 aa).

It belongs to the LamB/PxpA family. As to quaternary structure, forms a complex composed of PxpA, PxpB and PxpC.

The catalysed reaction is 5-oxo-L-proline + ATP + 2 H2O = L-glutamate + ADP + phosphate + H(+). Functionally, catalyzes the cleavage of 5-oxoproline to form L-glutamate coupled to the hydrolysis of ATP to ADP and inorganic phosphate. This chain is 5-oxoprolinase subunit A, found in Acinetobacter baumannii (strain AB307-0294).